Reading from the N-terminus, the 338-residue chain is MTTLRLLISDSYDPWFNLAVEEYIFRQMPATQRVLFLWRNADTVVIGRAQNPWKECNTRRMEEDNVRLARRSSGGGAVFHDLGNTCFTFMAGKPEYDKTISTHIVLAALNSLGVMADASGRNDLVVKTPDGDRKVSGSAYRETKDRGFHHGTLLLNADLSRLANYLNPDKKKLAAKGITSVRSRVANLTELLPGITHEQVCQAVTEAFFAHYGERIDAEVISPDKTPDLPNFTETFARQSSWEWNFGQAPAFSHLLDERFTWGGVELHFDVEKGVITRAQAFTDSLNPAPLEALAGRLQGCQYRADKLQETCEALIATFPEQESELRELANWVAGAVR.

A BPL/LPL catalytic domain is found at 29–216 (PATQRVLFLW…AFFAHYGERI (188 aa)). ATP is bound by residues arginine 71, 76 to 79 (GAVF), and lysine 134. (R)-lipoate is bound at residue lysine 134.

Belongs to the LplA family. Monomer.

It localises to the cytoplasm. It catalyses the reaction L-lysyl-[lipoyl-carrier protein] + (R)-lipoate + ATP = N(6)-[(R)-lipoyl]-L-lysyl-[lipoyl-carrier protein] + AMP + diphosphate + H(+). It functions in the pathway protein modification; protein lipoylation via exogenous pathway; protein N(6)-(lipoyl)lysine from lipoate: step 1/2. It participates in protein modification; protein lipoylation via exogenous pathway; protein N(6)-(lipoyl)lysine from lipoate: step 2/2. Functionally, catalyzes both the ATP-dependent activation of exogenously supplied lipoate to lipoyl-AMP and the transfer of the activated lipoyl onto the lipoyl domains of lipoate-dependent enzymes. This is Lipoate-protein ligase A from Salmonella paratyphi A (strain ATCC 9150 / SARB42).